A 340-amino-acid chain; its full sequence is 4-amino-5-hydroxymethyl-2-methylpyrimidine phosphate synthase THI5 (340 aa).

Lys-62 carries the N6-(pyridoxal phosphate)lysine modification. His-66 is an active-site residue. 115–118 (GEFG) contacts pyridoxal 5'-phosphate. Positions 195–199 (CCCFC) match the CCCFC; essential for catalytic activity, may be the site of iron coordination motif.

The protein belongs to the NMT1/THI5 family. Homodimer. Fe cation serves as cofactor.

The catalysed reaction is N(6)-(pyridoxal phosphate)-L-lysyl-[4-amino-5-hydroxymethyl-2-methylpyrimidine phosphate synthase] + L-histidyl-[4-amino-5-hydroxymethyl-2-methylpyrimidine phosphate synthase] + 2 Fe(3+) + 4 H2O = L-lysyl-[4-amino-5-hydroxymethyl-2-methylpyrimidine phosphate synthase] + (2S)-2-amino-5-hydroxy-4-oxopentanoyl-[4-amino-5-hydroxymethyl-2-methylpyrimidine phosphate synthase] + 4-amino-2-methyl-5-(phosphooxymethyl)pyrimidine + 3-oxopropanoate + 2 Fe(2+) + 2 H(+). Its pathway is cofactor biosynthesis; thiamine diphosphate biosynthesis. Functionally, responsible for the formation of the pyrimidine heterocycle in the thiamine biosynthesis pathway. Catalyzes the formation of hydroxymethylpyrimidine phosphate (HMP-P) from histidine and pyridoxal phosphate (PLP). The protein uses PLP and the active site histidine to form HMP-P, generating an inactive enzyme. The enzyme can only undergo a single turnover, which suggests it is a suicide enzyme. In Saccharomyces cerevisiae (strain ATCC 204508 / S288c) (Baker's yeast), this protein is 4-amino-5-hydroxymethyl-2-methylpyrimidine phosphate synthase THI5.